The sequence spans 154 residues: Ribonuclease H (154 aa).

Residues 3-144 enclose the RNase H type-1 domain; sequence ELPVVTIYTD…ADQLARDGIV (142 aa). Mg(2+) is bound by residues aspartate 12, glutamate 50, aspartate 72, and aspartate 136.

This sequence belongs to the RNase H family. In terms of assembly, monomer. Mg(2+) is required as a cofactor.

It is found in the cytoplasm. The catalysed reaction is Endonucleolytic cleavage to 5'-phosphomonoester.. In terms of biological role, endonuclease that specifically degrades the RNA of RNA-DNA hybrids. This is Ribonuclease H from Bradyrhizobium diazoefficiens (strain JCM 10833 / BCRC 13528 / IAM 13628 / NBRC 14792 / USDA 110).